Reading from the N-terminus, the 108-residue chain is Long neurotoxin 43 (108 aa).

The signal sequence occupies residues 1–21 (MKTLLLTLVVVTIVCLDLAYT). Cystine bridges form between C24-C42, C35-C63, C48-C52, C67-C78, and C79-C84.

The protein belongs to the three-finger toxin family. Long-chain subfamily. Type II alpha-neurotoxin sub-subfamily. Expressed by the venom gland.

The protein resides in the secreted. In terms of biological role, binds with high affinity to muscular (alpha-1/CHRNA1) and neuronal (alpha-7/CHRNA7) nicotinic acetylcholine receptor (nAChR) and inhibits acetylcholine from binding to the receptor, thereby impairing neuromuscular and neuronal transmission. In Drysdalia coronoides (White-lipped snake), this protein is Long neurotoxin 43.